The primary structure comprises 1511 residues: Bifunctional glutamate/proline--tRNA ligase (1511 aa).

Residues 164 to 758 are glutamate--tRNA ligase; that stretch reads GTKWDVSENK…SSVLYNRVAA (595 aa). Residues 204-214 carry the 'HIGH' region motif; sequence PEASGYLHIGH. The tract at residues 296-315 is disordered; sequence AEQMKAEREQRAESKHRQNS. The segment covering 299–315 has biased composition (basic and acidic residues); it reads MKAEREQRAESKHRQNS. Residue Lys300 is modified to N6-acetyllysine; alternate. N6-malonyllysine; alternate is present on Lys300. Phosphothreonine is present on Thr355. At Lys417 the chain carries N6-acetyllysine. Positions 432 to 436 match the 'KMSKS' region motif; it reads VLSKR. Ser434 is subject to Phosphoserine. N6-acetyllysine is present on residues Lys498, Lys535, Lys542, and Lys637. Over residues 708–728 the composition is skewed to basic and acidic residues; the sequence is KEMPTSGSKEKTKAEPLKKET. Residues 708–741 form a disordered region; that stretch reads KEMPTSGSKEKTKAEPLKKETSSAPKEGPVPAVS. Residue Ser746 is modified to Phosphoserine. The WHEP-TRS 1 domain occupies 748–804; sequence ESSVLYNRVAAQGDVVRELKAKKAAKEDVDAAVKQLLALKAEYKQKTGQEYKPGNPP. Residues 759-955 are 3 X 57 AA approximate repeats; the sequence is QGDVVRELKA…GIEYKPVSAT (197 aa). At Lys787 the chain carries N6-acetyllysine. The disordered stretch occupies residues 794 to 823; that stretch reads TGQEYKPGNPPSAAAQSASTKSLPSAGEDR. Positions 807–816 are enriched in polar residues; the sequence is AAQSASTKSL. Residues 821 to 877 enclose the WHEP-TRS 2 domain; sequence EDRSLYDKIAAQGEVVRKLKAEKAPKAKVTEAVECLLSLKAEYKEKTGKEYVPGQPP. Lys860 is modified (N6-acetyllysine). Disordered stretches follow at residues 868-903 and 952-1015; these read GKEY…AKAL and VSAT…RLGL. At Tyr871 the chain carries Phosphotyrosine. Over residues 877 to 890 the composition is skewed to low complexity; the sequence is PASQKSQPSPASKA. Ser885 is modified (phosphoserine; by CDK5). Residue Thr897 is modified to Phosphothreonine. One can recognise a WHEP-TRS 3 domain in the interval 899–955; the sequence is EAKALFDRVACQGEVVRKLKAEKASKDQVDPAVQELLQLKAQYKSLTGIEYKPVSAT. The segment covering 957-975 has biased composition (basic and acidic residues); that stretch reads SEDKDKKKKEKENKSEKQN. Gly residues predominate over residues 992-1005; the sequence is QGGGLSSSGAGEGQ. The residue at position 997 (Ser997) is a Phosphoserine. Ser998 is subject to Phosphoserine; by RPS6KB1. Ser999 is subject to Phosphoserine. Residues 1006–1511 are proline--tRNA ligase; the sequence is GPKKQTRLGL…KFYTLFGRSY (506 aa). L-proline is bound by residues 1120 to 1122 and Arg1151; that span reads TSE. Positions 1151, 1153, 1162, 1163, 1236, and 1239 each coordinate ATP. At Arg1151 the chain carries Omega-N-methylarginine. Residue Gln1236 participates in Mg(2+) binding. His1241 contacts L-proline. Residues Thr1275 and Arg1277 each contribute to the ATP site. At Ser1349 the chain carries Phosphoserine. Cys1447, Cys1452, Cys1494, and Cys1496 together coordinate Zn(2+). An N6-acetyllysine modification is found at Lys1502.

In the N-terminal section; belongs to the class-I aminoacyl-tRNA synthetase family. Glutamate--tRNA ligase type 2 subfamily. It in the C-terminal section; belongs to the class-II aminoacyl-tRNA synthetase family. Homodimer. Part of the aminoacyl-tRNA synthetase multienzyme complex, also know as multisynthetase complex, that is composed of the tRNA ligases for Arg (RARS1), Asp (DARS1), Gln (QARS1), Ile (IARS1), Leu (LARS1), Lys (KARS1), Met (MARS1) the bifunctional ligase for Glu and Pro (EPRS1) and the auxiliary subunits AIMP1/p43, AIMP2/p38 and EEF1E1/p18. Forms a linear complex that contains MARS1, EEF1E1, EPRS1 and AIMP2 that is at the core of the multisubunit complex. Interacts with TARS3. Interacts with DUS2L. Component of the GAIT complex which is composed of EPRS1, RPL13A and GAPDH. Interacts (phosphorylated at Ser-998) with SLC27A1; mediates the translocation of SLC27A1 from the cytoplasm to the plasma membrane thereby increasing the uptake of long-chain fatty acids. Phosphorylated at Ser-998 by RPS6KB1; triggers EPRS1 release from the aminoacyl-tRNA synthetase multienzyme complex. In monocytes, the IFN-gamma-induced phosphorylation at Ser-998 releases EPRS1 from the aminoacyl-tRNA synthetase multienzyme complex, allowing its association with the GAIT complex. Phosphorylation at Ser-998 is specifically required for the RPL13A-mediated interaction of the GAIT complex with eIF4G. Phosphorylation at Ser-998 by RPS6KB1, is also induced by insulin through activation of the mTORC1 signaling pathway and promotes the interaction of EPRS1 with SLC27A1.

It is found in the cytoplasm. The protein localises to the cytosol. It localises to the membrane. The enzyme catalyses tRNA(Glu) + L-glutamate + ATP = L-glutamyl-tRNA(Glu) + AMP + diphosphate. The catalysed reaction is tRNA(Pro) + L-proline + ATP = L-prolyl-tRNA(Pro) + AMP + diphosphate. In terms of biological role, multifunctional protein which primarily functions within the aminoacyl-tRNA synthetase multienzyme complex, also known as multisynthetase complex. Within the complex it catalyzes the attachment of both L-glutamate and L-proline to their cognate tRNAs in a two-step reaction where the amino acid is first activated by ATP to form a covalent intermediate with AMP. Subsequently, the activated amino acid is transferred to the acceptor end of the cognate tRNA to form L-glutamyl-tRNA(Glu) and L-prolyl-tRNA(Pro). Upon interferon-gamma stimulation, EPRS1 undergoes phosphorylation, causing its dissociation from the aminoacyl-tRNA synthetase multienzyme complex. It is recruited to form the GAIT complex, which binds to stem loop-containing GAIT elements found in the 3'-UTR of various inflammatory mRNAs, such as ceruloplasmin. The GAIT complex inhibits the translation of these mRNAs, allowing interferon-gamma to redirect the function of EPRS1 from protein synthesis to translation inhibition in specific cell contexts. Furthermore, it can function as a downstream effector in the mTORC1 signaling pathway, by promoting the translocation of SLC27A1 from the cytoplasm to the plasma membrane where it mediates the uptake of long-chain fatty acid by adipocytes. Thereby, EPRS1 also plays a role in fat metabolism and more indirectly influences lifespan. The polypeptide is Bifunctional glutamate/proline--tRNA ligase (Cricetulus griseus (Chinese hamster)).